A 219-amino-acid chain; its full sequence is Thiamine-phosphate synthase (219 aa).

4-amino-2-methyl-5-(diphosphooxymethyl)pyrimidine is bound by residues Q48–K52 and N80. Mg(2+) contacts are provided by D81 and D100. S119 is a binding site for 4-amino-2-methyl-5-(diphosphooxymethyl)pyrimidine. T145–T147 lines the 2-[(2R,5Z)-2-carboxy-4-methylthiazol-5(2H)-ylidene]ethyl phosphate pocket. K148 contacts 4-amino-2-methyl-5-(diphosphooxymethyl)pyrimidine. 2-[(2R,5Z)-2-carboxy-4-methylthiazol-5(2H)-ylidene]ethyl phosphate contacts are provided by residues G176 and V196 to S197.

Belongs to the thiamine-phosphate synthase family. It depends on Mg(2+) as a cofactor.

The enzyme catalyses 2-[(2R,5Z)-2-carboxy-4-methylthiazol-5(2H)-ylidene]ethyl phosphate + 4-amino-2-methyl-5-(diphosphooxymethyl)pyrimidine + 2 H(+) = thiamine phosphate + CO2 + diphosphate. The catalysed reaction is 2-(2-carboxy-4-methylthiazol-5-yl)ethyl phosphate + 4-amino-2-methyl-5-(diphosphooxymethyl)pyrimidine + 2 H(+) = thiamine phosphate + CO2 + diphosphate. It catalyses the reaction 4-methyl-5-(2-phosphooxyethyl)-thiazole + 4-amino-2-methyl-5-(diphosphooxymethyl)pyrimidine + H(+) = thiamine phosphate + diphosphate. It participates in cofactor biosynthesis; thiamine diphosphate biosynthesis; thiamine phosphate from 4-amino-2-methyl-5-diphosphomethylpyrimidine and 4-methyl-5-(2-phosphoethyl)-thiazole: step 1/1. Functionally, condenses 4-methyl-5-(beta-hydroxyethyl)thiazole monophosphate (THZ-P) and 2-methyl-4-amino-5-hydroxymethyl pyrimidine pyrophosphate (HMP-PP) to form thiamine monophosphate (TMP). In Albidiferax ferrireducens (strain ATCC BAA-621 / DSM 15236 / T118) (Rhodoferax ferrireducens), this protein is Thiamine-phosphate synthase.